The chain runs to 122 residues: Large ribosomal subunit protein uL14 (122 aa).

It belongs to the universal ribosomal protein uL14 family. Part of the 50S ribosomal subunit. Forms a cluster with proteins L3 and L19. In the 70S ribosome, L14 and L19 interact and together make contacts with the 16S rRNA in bridges B5 and B8.

Binds to 23S rRNA. Forms part of two intersubunit bridges in the 70S ribosome. In Flavobacterium psychrophilum (strain ATCC 49511 / DSM 21280 / CIP 103535 / JIP02/86), this protein is Large ribosomal subunit protein uL14.